We begin with the raw amino-acid sequence, 483 residues long: Peroxisomal biogenesis factor 3 (483 aa).

Residues 1–14 lie on the Peroxisomal side of the membrane; that stretch reads MTGNRSLVQRHRKK. A helical membrane pass occupies residues 15-35; the sequence is FVVSSVLFATLFATCAITVYF. Topologically, residues 36-483 are cytoplasmic; the sequence is SKRWLYKQHL…SACVYSNFGL (448 aa). 2 disordered regions span residues 119-149 and 230-253; these read GLSS…VSET and NNLP…TRSI. Residues 242 to 253 show a composition bias toward polar residues; that stretch reads SDGTIDTDTRSI.

Belongs to the peroxin-3 family.

It is found in the peroxisome membrane. Involved in peroxisome biosynthesis. The protein is Peroxisomal biogenesis factor 3 (PEX3) of Kluyveromyces lactis (strain ATCC 8585 / CBS 2359 / DSM 70799 / NBRC 1267 / NRRL Y-1140 / WM37) (Yeast).